The sequence spans 138 residues: Transcription antitermination protein NusB (138 aa).

It belongs to the NusB family.

In terms of biological role, involved in transcription antitermination. Required for transcription of ribosomal RNA (rRNA) genes. Binds specifically to the boxA antiterminator sequence of the ribosomal RNA (rrn) operons. The protein is Transcription antitermination protein NusB of Coxiella burnetii (strain Dugway 5J108-111).